The chain runs to 96 residues: MLASVLILGAIAVGSAIPTIAELKVDRSLCRKSPMEEFYVFENGEWVKKEELADWWLCIDVDSIERSDYYSAAKKAIELQKLGRDSPYYGGEWIGC.

The first 21 residues, 1–21 (MLASVLILGAIAVGSAIPTIA), serve as a signal peptide directing secretion.

This is an uncharacterized protein from Archaeoglobus fulgidus (strain ATCC 49558 / DSM 4304 / JCM 9628 / NBRC 100126 / VC-16).